Consider the following 354-residue polypeptide: 3-isopropylmalate dehydrogenase (354 aa).

76-87 (GPRWDGAKERPE) lines the NAD(+) pocket. Residues R94, R104, R130, and D215 each contribute to the substrate site. Residues D215, D239, and D243 each coordinate Mg(2+). 273-285 (GSAPDIAGKNKAN) is an NAD(+) binding site.

This sequence belongs to the isocitrate and isopropylmalate dehydrogenases family. LeuB type 1 subfamily. Homodimer. It depends on Mg(2+) as a cofactor. Mn(2+) serves as cofactor.

Its subcellular location is the cytoplasm. The enzyme catalyses (2R,3S)-3-isopropylmalate + NAD(+) = 4-methyl-2-oxopentanoate + CO2 + NADH. It participates in amino-acid biosynthesis; L-leucine biosynthesis; L-leucine from 3-methyl-2-oxobutanoate: step 3/4. Functionally, catalyzes the oxidation of 3-carboxy-2-hydroxy-4-methylpentanoate (3-isopropylmalate) to 3-carboxy-4-methyl-2-oxopentanoate. The product decarboxylates to 4-methyl-2 oxopentanoate. The protein is 3-isopropylmalate dehydrogenase of Bacillus cereus (strain ZK / E33L).